Reading from the N-terminus, the 164-residue chain is Small ribosomal subunit protein uS5 (164 aa).

The S5 DRBM domain occupies 10 to 73 (IEERVVAINR…ESAKKNMIEV (64 aa)).

This sequence belongs to the universal ribosomal protein uS5 family. As to quaternary structure, part of the 30S ribosomal subunit. Contacts proteins S4 and S8.

In terms of biological role, with S4 and S12 plays an important role in translational accuracy. Located at the back of the 30S subunit body where it stabilizes the conformation of the head with respect to the body. In Streptococcus suis (strain 98HAH33), this protein is Small ribosomal subunit protein uS5.